Reading from the N-terminus, the 293-residue chain is MTDTTRSLRDCLAPAKLNLFLHITGRRPDGYHALQSVFQLLDWGDRLHFTLRDDGKVSRVTDVPGVPEESDLVVRAASLLKAHAGATLGVDIEIDKRLPMGAGLGGGSSDAATTLLALNRLWRLDLPRTTLQSLAVKLGADVPFFVFGKNAFAEGIGEALQAVELPARWFLVVTPRVHVPTAAIFSEKSLTRDSKPITITDFLAQCGIDAGWPDSFGRNDMQPVVTSKYAEVAKVVEWFYNLTPARMTGSGASVFAAFKSKADAEAAQAKLPAGWNSAVAESMSEHPLFAFAS.

Lys16 is an active-site residue. ATP is bound at residue 99 to 109 (PMGAGLGGGSS). Asp141 is a catalytic residue.

This sequence belongs to the GHMP kinase family. IspE subfamily.

It catalyses the reaction 4-CDP-2-C-methyl-D-erythritol + ATP = 4-CDP-2-C-methyl-D-erythritol 2-phosphate + ADP + H(+). The protein operates within isoprenoid biosynthesis; isopentenyl diphosphate biosynthesis via DXP pathway; isopentenyl diphosphate from 1-deoxy-D-xylulose 5-phosphate: step 3/6. Its function is as follows. Catalyzes the phosphorylation of the position 2 hydroxy group of 4-diphosphocytidyl-2C-methyl-D-erythritol. This chain is 4-diphosphocytidyl-2-C-methyl-D-erythritol kinase, found in Burkholderia pseudomallei (strain 668).